Consider the following 138-residue polypeptide: Large ribosomal subunit protein uL16 (138 aa).

The span at 1–19 (MLSPKRTKYRKAHKGRIHG) shows a compositional bias: basic residues. Positions 1–21 (MLSPKRTKYRKAHKGRIHGNA) are disordered.

It belongs to the universal ribosomal protein uL16 family. Part of the 50S ribosomal subunit.

Its function is as follows. Binds 23S rRNA and is also seen to make contacts with the A and possibly P site tRNAs. The protein is Large ribosomal subunit protein uL16 of Granulibacter bethesdensis (strain ATCC BAA-1260 / CGDNIH1).